The chain runs to 504 residues: L-carnitine/gamma-butyrobetaine antiporter (504 aa).

A run of 12 helical transmembrane segments spans residues 8 to 28 (AGIEPKVFFPPLIIVGILCWL), 51 to 71 (WGWAFEWYMVIMFGGWFWLVF), 92 to 112 (IFMMFASCTSAAVLFWGSIEI), 143 to 163 (GPLPWATYSFLSVAFAYFFFV), 195 to 215 (FYLVALILAMGTSLGLATPLV), 231 to 251 (LDAIIISCWILLNAICVAFGL), 263 to 283 (TYLSFLMLGWVFIVGGASFIV), 315 to 335 (AWTVFYWAWWVIYAIQMSIFL), 347 to 367 (LCLGMVSGLTAGTWLIWTYSG), 403 to 423 (LSTATMWGFFILCFIATVTLI), 446 to 466 (LLVRIGWSVLVGIIGIILLAL), and 475 to 495 (AIIAGGCPLFFVNIMVTLSFI).

This sequence belongs to the BCCT transporter (TC 2.A.15) family. CaiT subfamily. Homotrimer.

Its subcellular location is the cell inner membrane. It carries out the reaction 4-(trimethylamino)butanoate(in) + (R)-carnitine(out) = 4-(trimethylamino)butanoate(out) + (R)-carnitine(in). It participates in amine and polyamine metabolism; carnitine metabolism. Catalyzes the exchange of L-carnitine for gamma-butyrobetaine. The chain is L-carnitine/gamma-butyrobetaine antiporter from Proteus sp. (strain LE138).